The sequence spans 122 residues: Small ribosomal subunit protein uS13 (122 aa).

Positions 95–122 (GLPVRGQRTHTNARTRKGPAKSIAGKKK) are disordered.

It belongs to the universal ribosomal protein uS13 family. Part of the 30S ribosomal subunit. Forms a loose heterodimer with protein S19. Forms two bridges to the 50S subunit in the 70S ribosome.

Its function is as follows. Located at the top of the head of the 30S subunit, it contacts several helices of the 16S rRNA. In the 70S ribosome it contacts the 23S rRNA (bridge B1a) and protein L5 of the 50S subunit (bridge B1b), connecting the 2 subunits; these bridges are implicated in subunit movement. Contacts the tRNAs in the A and P-sites. The polypeptide is Small ribosomal subunit protein uS13 (Nitrobacter hamburgensis (strain DSM 10229 / NCIMB 13809 / X14)).